Reading from the N-terminus, the 32-residue chain is MSDIN-like toxin proprotein 3 (32 aa).

A propeptide spanning residues 1 to 10 (MSDINATRLP) is cleaved from the precursor. The cyclopeptide (Val-Pro) cross-link spans 11 to 17 (VWIGYSP). Residues 18 to 32 (CVGDDAVALLNRGEG) constitute a propeptide that is removed on maturation.

It belongs to the MSDIN fungal toxin family. In terms of processing, processed by the macrocyclase-peptidase enzyme POPB to yield a toxic cyclic heptapeptide. POPB first removes 10 residues from the N-terminus. Conformational trapping of the remaining peptide forces the enzyme to release this intermediate rather than proceed to macrocyclization. The enzyme rebinds the remaining peptide in a different conformation and catalyzes macrocyclization of the N-terminal 7 residues.

Functionally, probable toxin that belongs to the MSDIN-like toxin family responsible for a large number of food poisoning cases and deaths. This Amanita fuligineoides protein is MSDIN-like toxin proprotein 3.